Reading from the N-terminus, the 867-residue chain is Protein translocase subunit SecA 1 (867 aa).

Residues Q86, 104–108 (GEGKT), and D493 contribute to the ATP site.

This sequence belongs to the SecA family. As to quaternary structure, monomer and homodimer. Part of the essential Sec protein translocation apparatus which comprises SecA, SecYEG and auxiliary proteins SecDF. Other proteins may also be involved.

Its subcellular location is the cell membrane. It localises to the cytoplasm. It catalyses the reaction ATP + H2O + cellular proteinSide 1 = ADP + phosphate + cellular proteinSide 2.. Functionally, part of the Sec protein translocase complex. Interacts with the SecYEG preprotein conducting channel. Has a central role in coupling the hydrolysis of ATP to the transfer of proteins into and across the cell membrane, serving as an ATP-driven molecular motor driving the stepwise translocation of polypeptide chains across the membrane. The polypeptide is Protein translocase subunit SecA 1 (Corynebacterium jeikeium (strain K411)).